Here is a 395-residue protein sequence, read N- to C-terminus: NAD(P)H-quinone oxidoreductase subunit H, chloroplastic (395 aa).

This sequence belongs to the complex I 49 kDa subunit family. As to quaternary structure, NDH is composed of at least 16 different subunits, 5 of which are encoded in the nucleus.

It localises to the plastid. The protein resides in the chloroplast thylakoid membrane. It catalyses the reaction a plastoquinone + NADH + (n+1) H(+)(in) = a plastoquinol + NAD(+) + n H(+)(out). The catalysed reaction is a plastoquinone + NADPH + (n+1) H(+)(in) = a plastoquinol + NADP(+) + n H(+)(out). In terms of biological role, NDH shuttles electrons from NAD(P)H:plastoquinone, via FMN and iron-sulfur (Fe-S) centers, to quinones in the photosynthetic chain and possibly in a chloroplast respiratory chain. The immediate electron acceptor for the enzyme in this species is believed to be plastoquinone. Couples the redox reaction to proton translocation, and thus conserves the redox energy in a proton gradient. This is NAD(P)H-quinone oxidoreductase subunit H, chloroplastic from Citrus sinensis (Sweet orange).